We begin with the raw amino-acid sequence, 1467 residues long: MGAATSALNRRQLDKFEHIRLRPTGKKKYQIKHLIWAGKEMERFGLHERLLESEEGCKKIIEVLYPLEPTGSEGLKSLFNLVCVLFCVHKDKEVKDTEEAVAIVRQCCHLVEKERNAERNTTETSSGQKKNDKGVTVPPGGSQNFPAQQQGNAWIHVPLSPRTLNAWVKAVEEKKFGAEIVPMFQALSEGCTPYDINQMLNVLGDHQGALQIVKEIINEEAAQWDIAHPPPAGPLPAGQLRDPRGSDIAGTTSTVQEQLEWIYTANPRVDVGAIYRRWIILGLQKCVKMYNPVSVLDIRQGPKEAFKDYVDRFYKAIRAEQASGEVKQWMTESLLIQNANPDCKVILKGLGMHPTLEEMLTACQGVGGPSYKAKVMAEMMQNMQSQNMMQQGGQRGRPRPPVKCYNCGKFGHMQRQCPEPRKMRCLKCGKPGHLAKDCRGQVNFFRVWTVDGGKTEKFSRRYSWSGTECASSTERHHPIRPSKEAPAAICRERETTEGAKEESTGNESGLDRGIFFELPLWRRPIKTVYIEGVPIKALLDTGADDTIIKENDLQLSGPWRPKIIGGIGGGLNVKEYNDREVKIEDKILRGTILLGATPINIIGRNLLAPAVPRLVMGQLSEKIPVTPVKLKEGARGPCVRQWPLSKEKIEALQEICSQLEQEGKISRVGGENAYNTPIFCIKKKDKSQWRMLVDFRELNKATQDFFEVQLGIPHPAGLRKMRQITVLDVGDAYYSIPLDPNFRKYTAFTIPTVNNQGPGIRYQFNCLPQGWKGSPTIFQNTAASILEEIKRNLPALTIVQYMDDLWVGSQENEHTHDKLVEQLRTKLQAWGLETPEKKMQKEPPYEWMGYKLWPHKWELSRIQLEEKDEWTVNDIQKLVGKLNWAAQLYPGLKTRICKLITGGKKNLLELVAWTPEAEAEYAENAEILKTEQEGTYYKPGIPIRAAVQKLEGGQWSYQFKQEGQVLKVGKYTKQKNTHTNELRTLAGLVQKICKEALVIWGILPVLELPIEREVWEQWWADYWQVSWIPEWDFVSTPPLLKLWYTLTKEPIPKEDVYYVGACNRNSKEGKAGYISQYGKQRVETLENTTNQQAKLTAIKMALEDSGPNVNIVTDSQYAMGILTAQPTQSDSPLVEQIIALMIQKQQIYLQWVPAHKGIGGNEEIDKLVSKGIRRVLFLEKIEEAQEKHERYHNNWKNLADTYGLPQIVAKEIVAMCPKCQIKGEPVHGQVDASPGTWQMDCTHLEKKVVIVAVHVASGFIEAEVIPRETGKETAKFLLKILSRWPITQLHTDNGPNFTSQEVAAICWWGKIEHTTGIPYNPQSQGSIESMNKQLKEIIGKIRDDCQYTEAAVLMACILHNFKRKGGIGGQTSAERLINIITTQLEIQHLQTKIQKILNFRVYYREGRDPVWKGPAQLIWKGEGAVVLKDGSDLKVVPRRKAKIIKDYEPKQRVGNEGDVEGTRGSDN.

A lipid anchor (N-myristoyl glycine; by host) is attached at glycine 2. The short motif at 16–22 is the Nuclear export signal element; sequence FEHIRLR. Positions 26 to 32 match the Nuclear localization signal motif; the sequence is KKKYQIK. A disordered region spans residues 116–144; the sequence is NAERNTTETSSGQKKNDKGVTVPPGGSQN. 2 CCHC-type zinc fingers span residues 402–419 and 423–440; these read VKCY…QCPE and MRCL…DCRG. A Peptidase A2 domain is found at 535 to 606; that stretch reads IKALLDTGAD…TPINIIGRNL (72 aa). The For protease activity; shared with dimeric partner role is filled by aspartate 540. The Reverse transcriptase domain maps to 662–852; it reads EGKISRVGGE…PPYEWMGYKL (191 aa). Residues aspartate 728, aspartate 803, and aspartate 804 each contribute to the Mg(2+) site. Residues 845 to 853 form an RT 'primer grip' region; that stretch reads YEWMGYKLW. Positions 1015-1031 match the Tryptophan repeat motif motif; it reads WEQWWADYWQVSWIPEW. The RNase H type-1 domain occupies 1050 to 1173; it reads PIPKEDVYYV…IDKLVSKGIR (124 aa). The Mg(2+) site is built by aspartate 1114 and aspartate 1165. The Integrase-type zinc-finger motif lies at 1179 to 1220; that stretch reads EKIEEAQEKHERYHNNWKNLADTYGLPQIVAKEIVAMCPKCQ. Zn(2+) is bound by residues histidine 1188, histidine 1192, cysteine 1216, and cysteine 1219. In terms of domain architecture, Integrase catalytic spans 1230–1380; it reads VDASPGTWQM…TSAERLINII (151 aa). Residues aspartate 1240 and aspartate 1292 each coordinate Mg(2+). Residues 1399–1446 constitute a DNA-binding region (integrase-type); that stretch reads FRVYYREGRDPVWKGPAQLIWKGEGAVVLKDGSDLKVVPRRKAKIIKD. The tract at residues 1447-1467 is disordered; it reads YEPKQRVGNEGDVEGTRGSDN.

In terms of assembly, homotrimer. Interacts with gp41 (via C-terminus). Homodimer. The active site consists of two apposed aspartic acid residues. As to quaternary structure, heterodimer of p66 RT and p51 RT (RT p66/p51). Heterodimerization of RT is essential for DNA polymerase activity. Despite the sequence identities, p66 RT and p51 RT have distinct folding. In terms of assembly, homotetramer; may further associate as a homohexadecamer. Mg(2+) serves as cofactor. Specific enzymatic cleavages by the viral protease yield mature proteins. The protease is released by autocatalytic cleavage. The polyprotein is cleaved during and after budding, this process is termed maturation. Proteolytic cleavage of p66 RT removes the RNase H domain to yield the p51 RT subunit. In terms of processing, capsid protein p24 is phosphorylated.

It localises to the virion. The protein localises to the host nucleus. The protein resides in the host cytoplasm. It is found in the host cell membrane. The enzyme catalyses Specific for a P1 residue that is hydrophobic, and P1' variable, but often Pro.. The catalysed reaction is Endohydrolysis of RNA in RNA/DNA hybrids. Three different cleavage modes: 1. sequence-specific internal cleavage of RNA. Human immunodeficiency virus type 1 and Moloney murine leukemia virus enzymes prefer to cleave the RNA strand one nucleotide away from the RNA-DNA junction. 2. RNA 5'-end directed cleavage 13-19 nucleotides from the RNA end. 3. DNA 3'-end directed cleavage 15-20 nucleotides away from the primer terminus.. It carries out the reaction 3'-end directed exonucleolytic cleavage of viral RNA-DNA hybrid.. It catalyses the reaction DNA(n) + a 2'-deoxyribonucleoside 5'-triphosphate = DNA(n+1) + diphosphate. With respect to regulation, the viral protease is inhibited by many synthetic protease inhibitors (PIs), such as amprenavir, atazanavir, indinavir, loprinavir, nelfinavir, ritonavir and saquinavir. RT can be inhibited either by nucleoside RT inhibitors (NRTIs) or by non nucleoside RT inhibitors (NNRTIs). NRTIs act as chain terminators, whereas NNRTIs inhibit DNA polymerization by binding a small hydrophobic pocket near the RT active site and inducing an allosteric change in this region. Classical NRTIs are abacavir, adefovir (PMEA), didanosine (ddI), lamivudine (3TC), stavudine (d4T), tenofovir (PMPA), zalcitabine (ddC), and zidovudine (AZT). Classical NNRTIs are atevirdine (BHAP U-87201E), delavirdine, efavirenz (DMP-266), emivirine (I-EBU), and nevirapine (BI-RG-587). The tritherapies used as a basic effective treatment of AIDS associate two NRTIs and one NNRTI. Use of protease inhibitors in tritherapy regimens permit more ambitious therapeutic strategies. Its function is as follows. Gag-Pol polyprotein and Gag polyprotein may regulate their own translation, by the binding genomic RNA in the 5'-UTR. At low concentration, Gag-Pol and Gag would promote translation, whereas at high concentration, the polyproteins encapsidate genomic RNA and then shut off translation. In terms of biological role, matrix protein p17 has two main functions: in infected cell, it targets Gag and Gag-pol polyproteins to the plasma membrane via a multipartite membrane-binding signal, that includes its myristointegration complex. The myristoylation signal and the NLS exert conflicting influences its subcellular localization. The key regulation of these motifs might be phosphorylation of a portion of MA molecules on the C-terminal tyrosine at the time of virus maturation, by virion-associated cellular tyrosine kinase. Implicated in the release from host cell mediated by Vpu. Capsid protein p24 forms the conical core that encapsulates the genomic RNA-nucleocapsid complex in the virion. The core is constituted by capsid protein hexamer subunits. The core is disassembled soon after virion entry. Interaction with host PPIA/CYPA protects the virus from restriction by host TRIM5-alpha and from an unknown antiviral activity in host cells. This capsid restriction by TRIM5 is one of the factors which restricts SIV to the simian species. Functionally, nucleocapsid protein p7 encapsulates and protects viral dimeric unspliced (genomic) RNA. Binds these RNAs through its zinc fingers. Facilitates rearangement of nucleic acid secondary structure during retrotranscription of genomic RNA. This capability is referred to as nucleic acid chaperone activity. Its function is as follows. The aspartyl protease mediates proteolytic cleavages of Gag and Gag-Pol polyproteins during or shortly after the release of the virion from the plasma membrane. Cleavages take place as an ordered, step-wise cascade to yield mature proteins. This process is called maturation. Displays maximal activity during the budding process just prior to particle release from the cell. Also cleaves Nef and Vif, probably concomitantly with viral structural proteins on maturation of virus particles. Hydrolyzes host EIF4GI and PABP1 in order to shut off the capped cellular mRNA translation. The resulting inhibition of cellular protein synthesis serves to ensure maximal viral gene expression and to evade host immune response. In terms of biological role, reverse transcriptase/ribonuclease H (RT) is a multifunctional enzyme that converts the viral dimeric RNA genome into dsDNA in the cytoplasm, shortly after virus entry into the cell. This enzyme displays a DNA polymerase activity that can copy either DNA or RNA templates, and a ribonuclease H (RNase H) activity that cleaves the RNA strand of RNA-DNA heteroduplexes in a partially processive 3' to 5' endonucleasic mode. Conversion of viral genomic RNA into dsDNA requires many steps. A tRNA binds to the primer-binding site (PBS) situated at the 5'-end of the viral RNA. RT uses the 3' end of the tRNA primer to perform a short round of RNA-dependent minus-strand DNA synthesis. The reading proceeds through the U5 region and ends after the repeated (R) region which is present at both ends of viral RNA. The portion of the RNA-DNA heteroduplex is digested by the RNase H, resulting in a ssDNA product attached to the tRNA primer. This ssDNA/tRNA hybridizes with the identical R region situated at the 3' end of viral RNA. This template exchange, known as minus-strand DNA strong stop transfer, can be either intra- or intermolecular. RT uses the 3' end of this newly synthesized short ssDNA to perform the RNA-dependent minus-strand DNA synthesis of the whole template. RNase H digests the RNA template except for two polypurine tracts (PPTs) situated at the 5'-end and near the center of the genome. It is not clear if both polymerase and RNase H activities are simultaneous. RNase H can probably proceed both in a polymerase-dependent (RNA cut into small fragments by the same RT performing DNA synthesis) and a polymerase-independent mode (cleavage of remaining RNA fragments by free RTs). Secondly, RT performs DNA-directed plus-strand DNA synthesis using the PPTs that have not been removed by RNase H as primers. PPTs and tRNA primers are then removed by RNase H. The 3' and 5' ssDNA PBS regions hybridize to form a circular dsDNA intermediate. Strand displacement synthesis by RT to the PBS and PPT ends produces a blunt ended, linear dsDNA copy of the viral genome that includes long terminal repeats (LTRs) at both ends. Integrase catalyzes viral DNA integration into the host chromosome, by performing a series of DNA cutting and joining reactions. This enzyme activity takes place after virion entry into a cell and reverse transcription of the RNA genome in dsDNA. The first step in the integration process is 3' processing. This step requires a complex comprising the viral genome, matrix protein, Vpr and integrase. This complex is called the pre-integration complex (PIC). The integrase protein removes 2 nucleotides from each 3' end of the viral DNA, leaving recessed CA OH's at the 3' ends. In the second step, the PIC enters cell nucleus. This process is mediated through integrase and Vpr proteins, and allows the virus to infect a non dividing cell. This ability to enter the nucleus is specific of lentiviruses, other retroviruses cannot and rely on cell division to access cell chromosomes. In the third step, termed strand transfer, the integrase protein joins the previously processed 3' ends to the 5' ends of strands of target cellular DNA at the site of integration. The 5'-ends are produced by integrase-catalyzed staggered cuts, 5 bp apart. A Y-shaped, gapped, recombination intermediate results, with the 5'-ends of the viral DNA strands and the 3' ends of target DNA strands remaining unjoined, flanking a gap of 5 bp. The last step is viral DNA integration into host chromosome. This involves host DNA repair synthesis in which the 5 bp gaps between the unjoined strands are filled in and then ligated. Since this process occurs at both cuts flanking the SIV genome, a 5 bp duplication of host DNA is produced at the ends of SIV integration. Alternatively, Integrase may catalyze the excision of viral DNA just after strand transfer, this is termed disintegration. The sequence is that of Gag-Pol polyprotein (gag-pol) from Cercopithecidae (Old World monkeys).